The following is a 107-amino-acid chain: Large ribosomal subunit protein uL24 (107 aa).

Belongs to the universal ribosomal protein uL24 family. As to quaternary structure, part of the 50S ribosomal subunit.

One of two assembly initiator proteins, it binds directly to the 5'-end of the 23S rRNA, where it nucleates assembly of the 50S subunit. Its function is as follows. One of the proteins that surrounds the polypeptide exit tunnel on the outside of the subunit. The chain is Large ribosomal subunit protein uL24 from Nitrosomonas eutropha (strain DSM 101675 / C91 / Nm57).